The sequence spans 472 residues: Interferon-induced protein with tetratricopeptide repeats 2 (472 aa).

At S2 the chain carries N-acetylserine. 9 TPR repeats span residues 51-89, 90-135, 136-171, 172-208, 247-280, 281-335, 336-366, 367-405, and 406-448; these read ATMC…ADQA, EIRS…RIES, PELD…KPKN, PEFT…NPDN, TDVL…IPNN, AYLH…NLFR, VCSI…KELT, PVAK…NQKS, and REKE…KMQQ. Residues 446-472 form a disordered region; the sequence is MQQADEDSERGLESGSLIPSASSWNGE. The span at 462–472 shows a compositional bias: polar residues; it reads LIPSASSWNGE.

The protein belongs to the IFIT family. In terms of assembly, domain-swapped homodimer. Component of an interferon-dependent multiprotein complex, at least composed of IFIT1, IFIT2 and IFIT3. Interacts with IFIT1 and IFIT3. Interacts with STING1/MITA and disrupts its interaction with MAVS or TBK1. Interacts with EIF3E and EIF3C.

Its subcellular location is the cytoplasm. The protein localises to the endoplasmic reticulum. IFN-induced antiviral protein which inhibits expression of viral messenger RNAs lacking 2'-O-methylation of the 5' cap. The ribose 2'-O-methylation would provide a molecular signature to distinguish between self and non-self mRNAs by the host during viral infection. Viruses evolved several ways to evade this restriction system such as encoding their own 2'-O-methylase for their mRNAs or by stealing host cap containing the 2'-O-methylation (cap snatching mechanism). Binds AU-rich viral RNAs, with or without 5' triphosphorylation, RNA-binding is required for antiviral activity. Can promote apoptosis. The polypeptide is Interferon-induced protein with tetratricopeptide repeats 2 (IFIT2) (Homo sapiens (Human)).